We begin with the raw amino-acid sequence, 236 residues long: Biosynthetic peptidoglycan transglycosylase (236 aa).

Residues 12-31 (ALLWFVAGSIVLVLVFRWVP) traverse the membrane as a helical segment.

The protein belongs to the glycosyltransferase 51 family.

Its subcellular location is the cell inner membrane. The enzyme catalyses [GlcNAc-(1-&gt;4)-Mur2Ac(oyl-L-Ala-gamma-D-Glu-L-Lys-D-Ala-D-Ala)](n)-di-trans,octa-cis-undecaprenyl diphosphate + beta-D-GlcNAc-(1-&gt;4)-Mur2Ac(oyl-L-Ala-gamma-D-Glu-L-Lys-D-Ala-D-Ala)-di-trans,octa-cis-undecaprenyl diphosphate = [GlcNAc-(1-&gt;4)-Mur2Ac(oyl-L-Ala-gamma-D-Glu-L-Lys-D-Ala-D-Ala)](n+1)-di-trans,octa-cis-undecaprenyl diphosphate + di-trans,octa-cis-undecaprenyl diphosphate + H(+). The protein operates within cell wall biogenesis; peptidoglycan biosynthesis. Peptidoglycan polymerase that catalyzes glycan chain elongation from lipid-linked precursors. The chain is Biosynthetic peptidoglycan transglycosylase from Pseudomonas putida (strain ATCC 700007 / DSM 6899 / JCM 31910 / BCRC 17059 / LMG 24140 / F1).